The following is a 107-amino-acid chain: Integration host factor subunit beta (107 aa).

Positions 76–107 (FVPHFKPGKELRERVDGRAGEPLKADDPDDDR) are disordered. Over residues 82 to 101 (PGKELRERVDGRAGEPLKAD) the composition is skewed to basic and acidic residues.

This sequence belongs to the bacterial histone-like protein family. As to quaternary structure, heterodimer of an alpha and a beta chain.

Its function is as follows. This protein is one of the two subunits of integration host factor, a specific DNA-binding protein that functions in genetic recombination as well as in transcriptional and translational control. The chain is Integration host factor subunit beta from Burkholderia cenocepacia (strain HI2424).